Consider the following 104-residue polypeptide: Flagellar hook-basal body complex protein FliE (104 aa).

The protein belongs to the FliE family.

The protein resides in the bacterial flagellum basal body. The sequence is that of Flagellar hook-basal body complex protein FliE from Edwardsiella ictaluri (strain 93-146).